Consider the following 278-residue polypeptide: Biotin synthase (278 aa).

Residues 1–227 enclose the Radical SAM core domain; the sequence is MQIMLCAISN…QSVVMVAGGR (227 aa). Positions 16, 20, and 23 each coordinate [4Fe-4S] cluster. Residues Cys60, Asn96, and Cys154 each coordinate [2Fe-2S] cluster.

It belongs to the radical SAM superfamily. Biotin synthase family. In terms of assembly, homodimer. It depends on [4Fe-4S] cluster as a cofactor. [2Fe-2S] cluster serves as cofactor.

It catalyses the reaction (4R,5S)-dethiobiotin + (sulfur carrier)-SH + 2 reduced [2Fe-2S]-[ferredoxin] + 2 S-adenosyl-L-methionine = (sulfur carrier)-H + biotin + 2 5'-deoxyadenosine + 2 L-methionine + 2 oxidized [2Fe-2S]-[ferredoxin]. It participates in cofactor biosynthesis; biotin biosynthesis; biotin from 7,8-diaminononanoate: step 2/2. Functionally, catalyzes the conversion of dethiobiotin (DTB) to biotin by the insertion of a sulfur atom into dethiobiotin via a radical-based mechanism. The sequence is that of Biotin synthase from Campylobacter jejuni subsp. jejuni serotype O:2 (strain ATCC 700819 / NCTC 11168).